Here is a 486-residue protein sequence, read N- to C-terminus: L-carnitine:corrinoid methyltransferase (486 aa).

This sequence belongs to the trimethylamine methyltransferase family. The L-carnitine:THF methyl transfer system is composed of two methyltransferases, MtcB and MtqA, and the corrinoid protein MtqC.

It catalyses the reaction Co(I)-[quaternary-amine-specific corrinoid protein] + (R)-carnitine + H(+) = (3R)-4-(dimethylamino)-3-hydroxybutanoate + methyl-Co(III)-[quaternary-amine-specific corrinoid protein]. Involved in the degradation of the quaternary amine L-carnitine. Component of a corrinoid-dependent methyltransferase system that transfers a methyl group from L-carnitine to tetrahydrofolate (THF), forming methyl-THF, a key intermediate in the Wood-Ljungdahl acetogenesis pathway. MtcB catalyzes the methylation of the corrinoid protein MtqC, using L-carnitine as the methyl donor. L-carnitine demethylation generates the unusual biological product norcarnitine, which is likely degraded by other members of the gut microbiota. In vitro, can methylate free cob(I)alamin. In Eubacterium limosum, this protein is L-carnitine:corrinoid methyltransferase.